A 105-amino-acid chain; its full sequence is Antitoxin HigA-1 (105 aa).

Residues 15-69 (LKVEFLEPMGITSKALAEAMGVHRNTVSNLINGGVLTAPVAIKLAAALGNTPEFW) enclose the HTH cro/C1-type domain. The segment at residues 27-46 (SKALAEAMGVHRNTVSNLIN) is a DNA-binding region (H-T-H motif).

In terms of biological role, antitoxin component of a type II toxin-antitoxin (TA) system that counteracts the effect of the HigB-1 toxin. Binds to its own promoter and regulates transcription of the higB-1/higA-1 operon. The chain is Antitoxin HigA-1 (higA-1) from Vibrio cholerae serotype O1 (strain ATCC 39315 / El Tor Inaba N16961).